Here is a 290-residue protein sequence, read N- to C-terminus: Probable protein phosphatase 2C 20 (290 aa).

Residues 31-278 (AHGYDFVKGK…DDISCIVPCF (248 aa)) form the PPM-type phosphatase domain. Positions 68, 69, 230, and 269 each coordinate Mn(2+).

The protein belongs to the PP2C family. Requires Mg(2+) as cofactor. Mn(2+) is required as a cofactor.

It catalyses the reaction O-phospho-L-seryl-[protein] + H2O = L-seryl-[protein] + phosphate. It carries out the reaction O-phospho-L-threonyl-[protein] + H2O = L-threonyl-[protein] + phosphate. Functionally, may be involved in defense signaling. This chain is Probable protein phosphatase 2C 20 (PPC3-1.2), found in Arabidopsis thaliana (Mouse-ear cress).